The sequence spans 868 residues: Leucine--tRNA ligase (868 aa).

A 'HIGH' region motif is present at residues Pro42–His52. A 'KMSKS' region motif is present at residues Lys627–Ser631. Position 630 (Lys630) interacts with ATP.

It belongs to the class-I aminoacyl-tRNA synthetase family.

Its subcellular location is the cytoplasm. It carries out the reaction tRNA(Leu) + L-leucine + ATP = L-leucyl-tRNA(Leu) + AMP + diphosphate. The polypeptide is Leucine--tRNA ligase (Pseudomonas fluorescens (strain ATCC BAA-477 / NRRL B-23932 / Pf-5)).